Reading from the N-terminus, the 401-residue chain is Acetate kinase (401 aa).

Residue N7 coordinates Mg(2+). Position 14 (K14) interacts with ATP. R91 contributes to the substrate binding site. D148 serves as the catalytic Proton donor/acceptor. Residues H208–G212, D283–R285, and G332–N336 contribute to the ATP site. E385 contributes to the Mg(2+) binding site.

Belongs to the acetokinase family. As to quaternary structure, homodimer. Requires Mg(2+) as cofactor. Mn(2+) is required as a cofactor.

The protein localises to the cytoplasm. It carries out the reaction acetate + ATP = acetyl phosphate + ADP. The protein operates within metabolic intermediate biosynthesis; acetyl-CoA biosynthesis; acetyl-CoA from acetate: step 1/2. Functionally, catalyzes the formation of acetyl phosphate from acetate and ATP. Can also catalyze the reverse reaction. The polypeptide is Acetate kinase (Thermoanaerobacter pseudethanolicus (strain ATCC 33223 / 39E) (Clostridium thermohydrosulfuricum)).